The chain runs to 290 residues: Fructose-1,6-bisphosphatase class 1 (290 aa).

Glu-78, Asp-96, Leu-98, and Asp-99 together coordinate Mg(2+). Substrate-binding positions include 99 to 102 (DGSS), Tyr-201, and Lys-226. Glu-232 lines the Mg(2+) pocket.

This sequence belongs to the FBPase class 1 family. Homotetramer. Mg(2+) is required as a cofactor.

The protein resides in the cytoplasm. The enzyme catalyses beta-D-fructose 1,6-bisphosphate + H2O = beta-D-fructose 6-phosphate + phosphate. Its pathway is carbohydrate biosynthesis; gluconeogenesis. This Helicobacter pylori (strain ATCC 700392 / 26695) (Campylobacter pylori) protein is Fructose-1,6-bisphosphatase class 1.